The sequence spans 313 residues: Pyrimidine-specific ribonucleoside hydrolase RihB (313 aa).

Glutamate 11 functions as the Proton acceptor in the catalytic mechanism. The Ca(2+) site is built by glutamate 11, aspartate 16, and valine 124. 2 residues coordinate substrate: glutamine 227 and histidine 239. Aspartate 240 provides a ligand contact to Ca(2+).

The protein belongs to the IUNH family. RihB subfamily. As to quaternary structure, homotetramer. The cofactor is Ca(2+).

The catalysed reaction is a pyrimidine ribonucleoside + H2O = a pyrimidine nucleobase + D-ribose. Hydrolyzes cytidine or uridine to ribose and cytosine or uracil, respectively. Has a clear preference for cytidine over uridine. Strictly specific for ribonucleosides. In Shigella flexneri serotype 5b (strain 8401), this protein is Pyrimidine-specific ribonucleoside hydrolase RihB.